A 111-amino-acid polypeptide reads, in one-letter code: Flagellar hook-basal body complex protein FliE (111 aa).

It belongs to the FliE family.

The protein resides in the bacterial flagellum basal body. In Clostridium acetobutylicum (strain ATCC 824 / DSM 792 / JCM 1419 / IAM 19013 / LMG 5710 / NBRC 13948 / NRRL B-527 / VKM B-1787 / 2291 / W), this protein is Flagellar hook-basal body complex protein FliE.